The sequence spans 356 residues: UDP-3-O-acylglucosamine N-acyltransferase (356 aa).

His251 (proton acceptor) is an active-site residue.

Belongs to the transferase hexapeptide repeat family. LpxD subfamily. In terms of assembly, homotrimer.

The catalysed reaction is a UDP-3-O-[(3R)-3-hydroxyacyl]-alpha-D-glucosamine + a (3R)-hydroxyacyl-[ACP] = a UDP-2-N,3-O-bis[(3R)-3-hydroxyacyl]-alpha-D-glucosamine + holo-[ACP] + H(+). The protein operates within bacterial outer membrane biogenesis; LPS lipid A biosynthesis. Functionally, catalyzes the N-acylation of UDP-3-O-acylglucosamine using 3-hydroxyacyl-ACP as the acyl donor. Is involved in the biosynthesis of lipid A, a phosphorylated glycolipid that anchors the lipopolysaccharide to the outer membrane of the cell. The chain is UDP-3-O-acylglucosamine N-acyltransferase from Ralstonia nicotianae (strain ATCC BAA-1114 / GMI1000) (Ralstonia solanacearum).